Here is a 253-residue protein sequence, read N- to C-terminus: Methionine aminopeptidase A (253 aa).

Substrate is bound at residue histidine 80. A divalent metal cation-binding residues include aspartate 98, aspartate 109, and histidine 172. Histidine 179 contacts substrate. A divalent metal cation is bound by residues glutamate 205 and glutamate 236.

This sequence belongs to the peptidase M24A family. Methionine aminopeptidase type 1 subfamily. As to quaternary structure, monomer. The cofactor is Co(2+). It depends on Zn(2+) as a cofactor. Mn(2+) is required as a cofactor. Fe(2+) serves as cofactor.

The enzyme catalyses Release of N-terminal amino acids, preferentially methionine, from peptides and arylamides.. Functionally, removes the N-terminal methionine from nascent proteins. The N-terminal methionine is often cleaved when the second residue in the primary sequence is small and uncharged (Met-Ala-, Cys, Gly, Pro, Ser, Thr, or Val). Requires deformylation of the N(alpha)-formylated initiator methionine before it can be hydrolyzed. The chain is Methionine aminopeptidase A from Synechocystis sp. (strain ATCC 27184 / PCC 6803 / Kazusa).